The primary structure comprises 304 residues: Ribonuclease Z (304 aa).

Zn(2+)-binding residues include H63, H65, D67, H68, H143, D213, and H271. The active-site Proton acceptor is D67.

Belongs to the RNase Z family. As to quaternary structure, homodimer. Requires Zn(2+) as cofactor.

It catalyses the reaction Endonucleolytic cleavage of RNA, removing extra 3' nucleotides from tRNA precursor, generating 3' termini of tRNAs. A 3'-hydroxy group is left at the tRNA terminus and a 5'-phosphoryl group is left at the trailer molecule.. In terms of biological role, zinc phosphodiesterase, which displays some tRNA 3'-processing endonuclease activity. Probably involved in tRNA maturation, by removing a 3'-trailer from precursor tRNA. This is Ribonuclease Z from Porphyromonas gingivalis (strain ATCC BAA-308 / W83).